The primary structure comprises 214 residues: Large ribosomal subunit protein uL1 (214 aa).

It belongs to the universal ribosomal protein uL1 family. In terms of assembly, component of the large ribosomal subunit.

Its subcellular location is the cytoplasm. Component of the large ribosomal subunit. The ribosome is a large ribonucleoprotein complex responsible for the synthesis of proteins in the cell. This is Large ribosomal subunit protein uL1 (RPL10A) from Entamoeba histolytica (strain ATCC 30459 / HM-1:IMSS / ABRM).